Consider the following 68-residue polypeptide: Conotoxin Pu5.5 (68 aa).

Positions 1 to 22 are cleaved as a signal peptide; the sequence is MRCVPVFIILLVLIASAPSVDA. A propeptide spanning residues 23-49 is cleaved from the precursor; the sequence is RPQTKDDALASFRDSIKRHLQTLLDAR.

Belongs to the conotoxin T superfamily. In terms of processing, contains 2 disulfide bonds that can be either 'C1-C3, C2-C4' or 'C1-C4, C2-C3', since these disulfide connectivities have been observed for conotoxins with cysteine framework V (for examples, see AC P0DQQ7 and AC P81755). As to expression, expressed by the venom duct.

The protein localises to the secreted. The sequence is that of Conotoxin Pu5.5 from Conus pulicarius (Flea-bitten cone).